Reading from the N-terminus, the 60-residue chain is MSSGKKAVKVKTPAGKEAELVPEKVWALAPKGRKGVKIGLFKDPETGKYFRHKLPDDYPI.

This sequence belongs to the Cren7 family. As to quaternary structure, monomer. Post-translationally, methylated at multiple sites, to varying extents.

The protein localises to the chromosome. The protein resides in the cytoplasm. In terms of biological role, a chromatin protein, binds double-stranded DNA without sequence specificity. Constrains negative DNA supercoils. This Saccharolobus islandicus (strain M.16.4 / Kamchatka #3) (Sulfolobus islandicus) protein is Chromatin protein Cren7.